The chain runs to 433 residues: Peptidoglycan glycosyltransferase RodA (433 aa).

Helical transmembrane passes span 9–29, 44–64, 74–94, 100–120, 158–178, 181–201, 221–241, 249–269, 295–315, 341–361, 378–398, and 400–420; these read FDYL…LFIY, YLKQ…VSMY, TLIF…GRYV, WIGV…AYIL, LGTA…AGFP, LIFA…LPLW, LSLF…VGYL, YWIT…LLGV, WHII…MGYL, WGFV…LHTL, GVLG…MGIM, and ITGI…TAMI.

The protein belongs to the SEDS family. MrdB/RodA subfamily.

It localises to the cell inner membrane. The catalysed reaction is [GlcNAc-(1-&gt;4)-Mur2Ac(oyl-L-Ala-gamma-D-Glu-L-Lys-D-Ala-D-Ala)](n)-di-trans,octa-cis-undecaprenyl diphosphate + beta-D-GlcNAc-(1-&gt;4)-Mur2Ac(oyl-L-Ala-gamma-D-Glu-L-Lys-D-Ala-D-Ala)-di-trans,octa-cis-undecaprenyl diphosphate = [GlcNAc-(1-&gt;4)-Mur2Ac(oyl-L-Ala-gamma-D-Glu-L-Lys-D-Ala-D-Ala)](n+1)-di-trans,octa-cis-undecaprenyl diphosphate + di-trans,octa-cis-undecaprenyl diphosphate + H(+). The protein operates within cell wall biogenesis; peptidoglycan biosynthesis. Peptidoglycan polymerase that is essential for cell wall elongation. This Treponema pallidum (strain Nichols) protein is Peptidoglycan glycosyltransferase RodA.